The following is a 239-amino-acid chain: LexA repressor (239 aa).

Positions 26–46 (FDEMKDALDLASKSGIHRLIT) form a DNA-binding region, H-T-H motif. Residues serine 159 and lysine 197 each act as for autocatalytic cleavage activity in the active site.

This sequence belongs to the peptidase S24 family. In terms of assembly, homodimer.

The enzyme catalyses Hydrolysis of Ala-|-Gly bond in repressor LexA.. Represses a number of genes involved in the response to DNA damage (SOS response), including recA and lexA. In the presence of single-stranded DNA, RecA interacts with LexA causing an autocatalytic cleavage which disrupts the DNA-binding part of LexA, leading to derepression of the SOS regulon and eventually DNA repair. This is LexA repressor from Rhizobium etli (strain ATCC 51251 / DSM 11541 / JCM 21823 / NBRC 15573 / CFN 42).